The chain runs to 29 residues: Lambda-theraphotoxin-Ec2a (29 aa).

Intrachain disulfides connect C2–C16, C9–C21, and C15–C25.

It belongs to the neurotoxin 30 (phrixotoxin) family. As to expression, expressed by the venom gland.

It localises to the secreted. Insect-selective neurotoxin that potently blocks insect calcium-activated potassium (BKCa) channels (Slo-type) in cockroach dorsal unpaired median (DUM) neurons (IC(50)=3.7 nM). This occurs in the absence of any shifts in the voltage dependence of activation. At high concentrations (330 nM), it partially inhibits cockroach delayed-rectifier potassium channels (Kv) currents. May interact with the turret and/or loop region of the external entrance to the channel and does not project deeply into the pore of the channel. In vivo, does not show toxicity in mice after intracerebroventricular injection of up to 25 pmol/g (1.8 ug/20 g mouse). In Eucratoscelus constrictus (African red-rump baboon spider), this protein is Lambda-theraphotoxin-Ec2a.